Reading from the N-terminus, the 222-residue chain is V-type ATP synthase subunit D (222 aa).

Belongs to the V-ATPase D subunit family.

Functionally, produces ATP from ADP in the presence of a proton gradient across the membrane. This is V-type ATP synthase subunit D from Clostridioides difficile (strain 630) (Peptoclostridium difficile).